The primary structure comprises 472 residues: WASH complex subunit 1 (472 aa).

Residues 1–51 (MPQNRSVESQAYSLPLILPDLRREEAIHQITDTLQHLQTVSNDIFSRILQR) form a required for WASH complex assembly region. Disordered stretches follow at residues 294 to 411 (DRQD…GGDL) and 429 to 472 (KVPA…DWES). The span at 301 to 334 (LPPPPPPPPPPPPPPPPEPSALSPPAPPPPPLSI) shows a compositional bias: pro residues. The tract at residues 352–472 (QGAPKEVVNP…GDGDEDDWES (121 aa)) is VCA. One can recognise a WH2 domain in the interval 364–386 (GRASLLESIRQAGGIGKANLRNV). Positions 385 to 400 (NVKEKKLEKKKMKEQE) are enriched in basic and acidic residues.

It belongs to the WASH1 family. Component of the WASH complex.

The protein localises to the early endosome membrane. It is found in the recycling endosome membrane. Acts as a nucleation-promoting factor at the surface of endosomes, where it recruits and activates the Arp2/3 complex to induce actin polymerization, playing a key role in the fission of tubules that serve as transport intermediates during endosome sorting. The polypeptide is WASH complex subunit 1 (Xenopus laevis (African clawed frog)).